Reading from the N-terminus, the 738-residue chain is Ethylene receptor 1 (738 aa).

3 helical membrane passes run 23 to 43 (ISDF…IYFV), 53 to 73 (WVLV…LINL), and 92 to 112 (VLTA…IPDL). Residues Cys65 and His69 each contribute to the Cu cation site. Residues 158-307 (DRHTILKTTL…VVADQVAVAL (150 aa)) form the GAF domain. The Histidine kinase domain maps to 350-585 (VMNHEMRTPM…IFDVKLGISE (236 aa)). Position 353 is a phosphohistidine; by autocatalysis (His353). ADP is bound by residues 470-473 (NAVK), Asp513, Lys529, Ser544, and Leu548. In terms of domain architecture, Response regulatory spans 611-729 (KVLVMDENGV…NIRDVLSDLL (119 aa)). Position 659 is a 4-aspartylphosphate (Asp659). Lys714 participates in a covalent cross-link: Glycyl lysine isopeptide (Lys-Gly) (interchain with G-Cter in ubiquitin).

The protein belongs to the ethylene receptor family. As to quaternary structure, homodimer; disulfide-linked. Heteromer with ERS1, ERS2, ETR2 and EIN4. Interacts with AHP1, AHP2 and AHP3. Interacts with RTE1. Interacts with EIN2. The cofactor is Cu cation. Post-translationally, autophosphorylated. Phosphorylation at His-353 modulates the interaction with EIN2. Leaves, roots, stems, seedlings, flowers, anthers, carpels and ovules.

Its subcellular location is the endoplasmic reticulum membrane. It catalyses the reaction ATP + protein L-histidine = ADP + protein N-phospho-L-histidine.. Functionally, ethylene receptor related to bacterial two-component regulators. Acts as a redundant negative regulator of ethylene signaling. In the presence of ethylene, the auto-kinase activity of ETR1 is inhibited and the non-phosphorylated kinase domain binds tightly to the corresponding domain of EIN2. This chain is Ethylene receptor 1, found in Arabidopsis thaliana (Mouse-ear cress).